A 760-amino-acid chain; its full sequence is Catecholate siderophore receptor Fiu (760 aa).

Positions 1–31 (MENNRNFPARQFHSLTFFAGLCIGITPVAQA) are cleaved as a signal peptide. A TBDR plug domain is found at 67 to 175 (PVADTTRTMT…PTGSINMISK (109 aa)). The TBDR beta-barrel domain occupies 180-760 (DSGIDASASI…TFLLTANMHF (581 aa)). The TonB C-terminal box motif lies at 743–760 (RYHPGEPRTFLLTANMHF).

This sequence belongs to the TonB-dependent receptor family.

The protein resides in the cell outer membrane. Involved in the active transport across the outer membrane of iron complexed with catecholate siderophores such as dihydroxybenzoylserine and dihydroxybenzoate. It derives its energy for transport by interacting with the trans-periplasmic membrane protein TonB. Can also transport catechol-substituted cephalosporins. Receptor for microcins M, H47 and E492. This is Catecholate siderophore receptor Fiu (fiu) from Escherichia coli (strain UTI89 / UPEC).